We begin with the raw amino-acid sequence, 225 residues long: MTPRLRLQPESVGIGMTSQRVRDRLVERLRESGIQDEATLNAVRTVPRHLFIDEALASRAYEDTALPIGHGQTISQPWVVARMTEAVLQVAPKKVLEVGTGSGYQGAILAALGLEVYTVERIGDLLRQARKRFRHLGMNVRSKHDDGRIGWPEHGPYDAIVVTAAAPALVDALVDQLAVGGRLVAPVGGASSQSLVQLTRGADGEIAQEVLAPVTFVPLLSGMLD.

The active site involves S75.

Belongs to the methyltransferase superfamily. L-isoaspartyl/D-aspartyl protein methyltransferase family.

The protein localises to the cytoplasm. It carries out the reaction [protein]-L-isoaspartate + S-adenosyl-L-methionine = [protein]-L-isoaspartate alpha-methyl ester + S-adenosyl-L-homocysteine. Its function is as follows. Catalyzes the methyl esterification of L-isoaspartyl residues in peptides and proteins that result from spontaneous decomposition of normal L-aspartyl and L-asparaginyl residues. It plays a role in the repair and/or degradation of damaged proteins. This Xanthomonas campestris pv. campestris (strain 8004) protein is Protein-L-isoaspartate O-methyltransferase.